A 202-amino-acid polypeptide reads, in one-letter code: Thymidine kinase (202 aa).

ATP contacts are provided by residues 16-23 (GPMFSGKS) and 99-102 (DEVQ). Glu100 acts as the Proton acceptor in catalysis. Residues Cys156, Cys159, Cys194, and His197 each coordinate Zn(2+).

It belongs to the thymidine kinase family. Homotetramer.

It is found in the cytoplasm. It catalyses the reaction thymidine + ATP = dTMP + ADP + H(+). In Deinococcus deserti (strain DSM 17065 / CIP 109153 / LMG 22923 / VCD115), this protein is Thymidine kinase.